A 294-amino-acid polypeptide reads, in one-letter code: Tryptophan 2,3-dioxygenase (294 aa).

Residues 1–20 (MSEFKGCPFSGAASEAGTKA) form a disordered region. Residues 63-67 (FIVQH), tyrosine 125, and arginine 129 contribute to the substrate site. Residue histidine 252 coordinates heme. Threonine 266 contributes to the substrate binding site.

It belongs to the tryptophan 2,3-dioxygenase family. Homotetramer. It depends on heme as a cofactor.

It catalyses the reaction L-tryptophan + O2 = N-formyl-L-kynurenine. The protein operates within amino-acid degradation; L-tryptophan degradation via kynurenine pathway; L-kynurenine from L-tryptophan: step 1/2. In terms of biological role, heme-dependent dioxygenase that catalyzes the oxidative cleavage of the L-tryptophan (L-Trp) pyrrole ring and converts L-tryptophan to N-formyl-L-kynurenine. Catalyzes the oxidative cleavage of the indole moiety. This Cupriavidus necator (strain ATCC 17699 / DSM 428 / KCTC 22496 / NCIMB 10442 / H16 / Stanier 337) (Ralstonia eutropha) protein is Tryptophan 2,3-dioxygenase.